The following is a 208-amino-acid chain: Protein GrpE (208 aa).

Residues 1 to 12 (MTNKDESVEKNT) are compositionally biased toward basic and acidic residues. The tract at residues 1–49 (MTNKDESVEKNTESTVEVTNVKQNIDDSVEQTEESKGHLQDEAIEETSD) is disordered. Residues 13 to 23 (ESTVEVTNVKQ) show a composition bias toward polar residues.

The protein belongs to the GrpE family. Homodimer.

It localises to the cytoplasm. Participates actively in the response to hyperosmotic and heat shock by preventing the aggregation of stress-denatured proteins, in association with DnaK and GrpE. It is the nucleotide exchange factor for DnaK and may function as a thermosensor. Unfolded proteins bind initially to DnaJ; upon interaction with the DnaJ-bound protein, DnaK hydrolyzes its bound ATP, resulting in the formation of a stable complex. GrpE releases ADP from DnaK; ATP binding to DnaK triggers the release of the substrate protein, thus completing the reaction cycle. Several rounds of ATP-dependent interactions between DnaJ, DnaK and GrpE are required for fully efficient folding. In Staphylococcus aureus (strain bovine RF122 / ET3-1), this protein is Protein GrpE.